A 120-amino-acid polypeptide reads, in one-letter code: uncharacterized protein (120 aa).

Residues 29–120 (QRQAAVLVPI…QVTPVVGIIP (92 aa)) form the Nudix hydrolase domain. Residues 67–89 (GAVDNSDATLIAAALREAQEEVA) carry the Nudix box motif. Residues glutamate 83 and glutamate 87 each coordinate Mg(2+).

It belongs to the Nudix hydrolase family. PCD1 subfamily. It depends on Mn(2+) as a cofactor. The cofactor is Mg(2+).

Its function is as follows. Probably mediates the hydrolysis of some nucleoside diphosphate derivatives. This is an uncharacterized protein from Klebsiella aerogenes (Enterobacter aerogenes).